The following is a 470-amino-acid chain: Pyruvate kinase I (470 aa).

Position 32 (Arg-32) interacts with substrate. Residues Asn-34, Ser-36, Asp-66, and Thr-67 each contribute to the K(+) site. ATP is bound at residue 34–37; sequence NFSH. ATP-binding residues include Arg-73 and Lys-156. Lys-220 contacts substrate. Glu-222 contacts Mg(2+). 3 residues coordinate substrate: Gly-245, Asp-246, and Thr-278. Asp-246 serves as a coordination point for Mg(2+).

This sequence belongs to the pyruvate kinase family. Homotetramer. Requires Mg(2+) as cofactor. K(+) serves as cofactor.

The catalysed reaction is pyruvate + ATP = phosphoenolpyruvate + ADP + H(+). The protein operates within carbohydrate degradation; glycolysis; pyruvate from D-glyceraldehyde 3-phosphate: step 5/5. With respect to regulation, belongs to type I PK; fructose 1,6-bisphosphate-activated. Catalyzes the formation of pyruvate in the last step of glycolysis, it is irreversible under physiological conditions. The reaction is critical for the control of metabolic flux in the second part of glycolysis. The protein is Pyruvate kinase I (pykF) of Salmonella typhimurium (strain LT2 / SGSC1412 / ATCC 700720).